A 93-amino-acid polypeptide reads, in one-letter code: Neurophysin 1 (93 aa).

7 disulfides stabilise this stretch: Cys10–Cys54, Cys13–Cys27, Cys21–Cys44, Cys28–Cys34, Cys61–Cys74, Cys68–Cys86, and Cys75–Cys80.

Belongs to the vasopressin/oxytocin family.

It is found in the secreted. In terms of biological role, neurophysin 1 specifically binds oxytocin. In Anser anser anser (Western greylag goose), this protein is Neurophysin 1.